Here is a 589-residue protein sequence, read N- to C-terminus: MTKKLTPQEKQNRKPAVRACVFCHQKHLQCSNERPCKNCVKRNIGHECRDIVRKRVQYLTGNGKGSSSKTKTPRKKLKSTPITASSPSVASTISPLPIDAGLKQEFSTPNEIPMSEPSLTNQPLSMSPLNPQGANNITNNFNSHATSQQIKEILEVPPHVNSMMNNSGLNTNVSLTPETLMIPDHLQFHTTTMLNTTNDVLNKLLTDQFETESLISANNSNNTSHNDNFIAQNNNNNPEPSNLHNRHQFSSNYLNEEYLMLGDILLHSKPVSPSPSNTSASEYNTNTLSPTNFGFIQNIDFEGFNQPKKKVAKKLKESRPFISLGYTDDSTLRLNHAPEANGQTEDLLDHNKDDSRKNPGNGNSIINFETKYVKDYVAPFITNGLYQSVKDIYSYQIINYEYPDSYHALTKFLKERFGGNDLSIDERKEKRSKLLVILKLIASYRPTFIAAHKSLLKPQDLLFLEMSLQRSLLDYKKLVELSSSPSIMWRRTGEIIYITEEMGLLLGYSPIEILEKRFFLFSLMPDEEIIRYFKFFKNIAVNDLQSSISIKVKLINKEGRLVEFCSVYTIKRDIFDIPMLIVGQFLPVM.

Residues 20 to 48 constitute a DNA-binding region (zn(2)-C6 fungal-type); it reads CVFCHQKHLQCSNERPCKNCVKRNIGHEC. Disordered stretches follow at residues 59 to 90, 218 to 240, and 340 to 362; these read LTGN…PSVA, NNSN…NPEP, and ANGQ…PGNG. Positions 80 to 90 are enriched in polar residues; that stretch reads TPITASSPSVA. Residues 347 to 357 are compositionally biased toward basic and acidic residues; that stretch reads LLDHNKDDSRK. The region spanning 471–542 is the PAS domain; the sequence is SLLDYKKLVE…FKFFKNIAVN (72 aa).

It belongs to the ERT1/acuK family.

The protein resides in the nucleus. Transcription factor which regulates nonfermentable carbon utilization. This is Glucose starvation modulator protein 1 (GSM1) from Candida tropicalis (strain ATCC MYA-3404 / T1) (Yeast).